We begin with the raw amino-acid sequence, 149 residues long: UPF0260 protein Pput_1301 (149 aa).

Belongs to the UPF0260 family.

The sequence is that of UPF0260 protein Pput_1301 from Pseudomonas putida (strain ATCC 700007 / DSM 6899 / JCM 31910 / BCRC 17059 / LMG 24140 / F1).